The sequence spans 901 residues: DNA mismatch repair protein MutS (901 aa).

Residues 1 to 12 show a composition bias toward polar residues; that stretch reads MKYSASTSTPKS. Residues 1–25 form a disordered region; it reads MKYSASTSTPKSAQPKEEELENSLP. 679-686 provides a ligand contact to ATP; sequence GPNASGKS.

It belongs to the DNA mismatch repair MutS family.

This protein is involved in the repair of mismatches in DNA. It is possible that it carries out the mismatch recognition step. This protein has a weak ATPase activity. The protein is DNA mismatch repair protein MutS of Trichodesmium erythraeum (strain IMS101).